Here is a 978-residue protein sequence, read N- to C-terminus: Receptor like protein 21 (978 aa).

Residues 1-27 (MLLAMEGKLFLCQYLIWVMLLLGQLHG) form the signal peptide. The Extracellular segment spans residues 28–930 (CTSCIEKERE…EEDDKAAIDM (903 aa)). N-linked (GlcNAc...) asparagine glycans are attached at residues asparagine 64, asparagine 79, asparagine 102, asparagine 116, and asparagine 155. 28 LRR repeats span residues 141–167 (LRNL…AATS), 169–189 (TTLI…GLKD), 190–213 (LTNL…LIHL), 214–237 (KKLK…ELQN), 238–262 (LINL…VFCK), 264–287 (KNLR…LGSL), 288–310 (KKLR…SFSS), 312–335 (ESLE…PLTN), 337–361 (TNLK…TWQP), 362–385 (NFQL…LLYQ), 386–409 (KKLR…LLTN), 410–432 (NPEL…PTMV), 433–455 (HNLQ…MDHA), 457–480 (PNLV…IGEM), 481–504 (KNIS…FVTG), 506–529 (VSIM…ETNF), 530–553 (PSLD…LSNS), 554–577 (TMLR…LFEF), 579–601 (YLDY…LLGM), 602–625 (PFLS…VDSE), 627–646 (GIYM…DTLL), 647–671 (KSVQ…DTQS), 673–693 (NILL…LCDL), 694–716 (SNVR…CLSN), 788–811 (LRLM…ELGD), 812–835 (LLKL…SFSK), 837–859 (IDVE…LLSS), and 860–885 (LTSL…QFNT). The N-linked (GlcNAc...) asparagine glycan is linked to asparagine 204. Residue asparagine 335 is glycosylated (N-linked (GlcNAc...) asparagine). N-linked (GlcNAc...) asparagine glycosylation is found at asparagine 397 and asparagine 420. Residues asparagine 463, asparagine 482, and asparagine 492 are each glycosylated (N-linked (GlcNAc...) asparagine). Asparagine 552 carries N-linked (GlcNAc...) asparagine glycosylation. A glycan (N-linked (GlcNAc...) asparagine) is linked at asparagine 636. 2 N-linked (GlcNAc...) asparagine glycosylation sites follow: asparagine 681 and asparagine 716. An N-linked (GlcNAc...) asparagine glycan is attached at asparagine 819. Asparagine 872 carries N-linked (GlcNAc...) asparagine glycosylation. Positions 902-922 (TSRSCETNKSPEEADNGQEEE) are disordered. The chain crosses the membrane as a helical span at residues 931–951 (MVFYFSTASIYVTALIGVLVL). At 952–978 (MCFDCPWRRAWLRIVDAFIASAKHVLP) the chain is on the cytoplasmic side.

Belongs to the RLP family.

The protein localises to the cell membrane. In Arabidopsis thaliana (Mouse-ear cress), this protein is Receptor like protein 21.